A 229-amino-acid polypeptide reads, in one-letter code: PKHD-type hydroxylase BRADO4652 (229 aa).

The Fe2OG dioxygenase domain occupies 78-180 (QIFPPLFNRY…RVASFFWMQS (103 aa)). Residues His98, Asp100, and His161 each coordinate Fe cation. Residue Arg171 participates in 2-oxoglutarate binding.

It depends on Fe(2+) as a cofactor. Requires L-ascorbate as cofactor.

This Bradyrhizobium sp. (strain ORS 278) protein is PKHD-type hydroxylase BRADO4652.